We begin with the raw amino-acid sequence, 615 residues long: 1-deoxy-D-xylulose-5-phosphate synthase (615 aa).

Thiamine diphosphate-binding positions include histidine 72 and 111 to 113 (GHS). Position 142 (aspartate 142) interacts with Mg(2+). Thiamine diphosphate-binding positions include 143 to 144 (GA), asparagine 171, tyrosine 278, and glutamate 360. A Mg(2+)-binding site is contributed by asparagine 171.

This sequence belongs to the transketolase family. DXPS subfamily. As to quaternary structure, homodimer. Mg(2+) is required as a cofactor. It depends on thiamine diphosphate as a cofactor.

It carries out the reaction D-glyceraldehyde 3-phosphate + pyruvate + H(+) = 1-deoxy-D-xylulose 5-phosphate + CO2. Its pathway is metabolic intermediate biosynthesis; 1-deoxy-D-xylulose 5-phosphate biosynthesis; 1-deoxy-D-xylulose 5-phosphate from D-glyceraldehyde 3-phosphate and pyruvate: step 1/1. Its function is as follows. Catalyzes the acyloin condensation reaction between C atoms 2 and 3 of pyruvate and glyceraldehyde 3-phosphate to yield 1-deoxy-D-xylulose-5-phosphate (DXP). In Campylobacter jejuni subsp. doylei (strain ATCC BAA-1458 / RM4099 / 269.97), this protein is 1-deoxy-D-xylulose-5-phosphate synthase.